Here is a 262-residue protein sequence, read N- to C-terminus: Global transcriptional regulator CodY (262 aa).

Positions 1–159 are GAF domain; the sequence is MAHLLEKTRK…ASTVVGIQLL (159 aa). The segment at residues 207–226 is a DNA-binding region (H-T-H motif); that stretch reads ASVIADRIGITRSVIVNALR.

This sequence belongs to the CodY family.

Its subcellular location is the cytoplasm. DNA-binding global transcriptional regulator which is involved in the adaptive response to starvation and acts by directly or indirectly controlling the expression of numerous genes in response to nutrient availability. During rapid exponential growth, CodY is highly active and represses genes whose products allow adaptation to nutrient depletion. This Streptococcus pneumoniae (strain ATCC BAA-255 / R6) protein is Global transcriptional regulator CodY.